The chain runs to 655 residues: A-type voltage-gated potassium channel KCND3 (655 aa).

At M1 to A182 the chain is on the cytoplasmic side. Residues A6 to P21 form an interaction with KCNIP1 and KCNIP2 region. The tract at residues E70–D78 is interaction with KCNIP1. The Zn(2+) site is built by H104, C110, C131, and C132. Phosphoserine is present on S153. The helical transmembrane segment at L183–T204 threads the bilayer. The Extracellular segment spans residues V205 to S223. A helical membrane pass occupies residues V224–F246. Residues A247–R253 are Cytoplasmic-facing. The helical transmembrane segment at F254–T277 threads the bilayer. Residues N278–S283 are Extracellular-facing. The chain crosses the membrane as a helical; Voltage-sensor span at residues G284–G306. Residues L307–A318 are Cytoplasmic-facing. A helical transmembrane segment spans residues S319–E343. Residues K344–T352 are Extracellular-facing. The segment at residues S353–T366 is an intramembrane region (helical). K(+)-binding residues include T367, L368, G369, and Y370. The Selectivity filter motif lies at T367–D372. The stretch at T367–V374 is an intramembrane region. The helical transmembrane segment at I378–P400 threads the bilayer. The Cytoplasmic portion of the chain corresponds to V401–L655. T459 is modified (phosphothreonine). Residues S470 to T487 are interaction with KCNIP1 and KCNIP2. The mediates dendritic targeting stretch occupies residues I472–T487. The span at M525 to S548 shows a compositional bias: polar residues. The tract at residues M525–T565 is disordered. S569 bears the Phosphoserine; by CaMK2D mark. S585 bears the Phosphoserine mark. Residues I615–L655 are disordered. A compositionally biased stretch (polar residues) spans G637–S647.

The protein belongs to the potassium channel family. D (Shal) (TC 1.A.1.2) subfamily. Kv4.3/KCND3 sub-subfamily. Homotetramer. Heterotetramer with KCND2. Associates with the regulatory subunits KCNIP3 and KCNIP4. Interacts with KCNE1, KCNE2, SCN1B and KCNAB1 and DLG1. Component of heteromultimeric potassium channels. Identified in potassium channel complexes containing KCND1, KCND2, KCND3, KCNIP1, KCNIP2, KCNIP3, KCNIP4, DPP6 and DPP10. Interacts with KCNIP1; each KCNIP1 monomer interacts with two adjacent KCND3 subunits, through both the N-terminal inactivation ball of a KCND3 subunit and a C-terminal helix from the adjacent KCND3 subunit, clamping them together; this interaction stabilizes the tetrameric form and modulates the channel gating kinetics namely channel activation and inactivation kinetics and rate of recovery from inactivation. Interacts with DPP6; this interaction modulates the channel gating kinetics namely channel activation and inactivation kinetics and rate of recovery from inactivation. Interacts with KCNIP2; each KCNIP2 monomer interacts with two adjacent KCND3 subunits, through both the N-terminal inactivation ball of a KCND3 subunit and a C-terminal helix from the adjacent KCND3 subunit, clamping them together; this interaction modulates the channel gating kinetics. Regulated through phosphorylation at Ser-569 by CaMK2D. As to expression, highly expressed in heart and brain, in particular in cortex, cerebellum, amygdala and caudate nucleus. Detected at lower levels in liver, skeletal muscle, kidney and pancreas.

The protein localises to the cell membrane. It is found in the sarcolemma. It localises to the cell projection. Its subcellular location is the dendrite. It catalyses the reaction K(+)(in) = K(+)(out). In terms of biological role, pore-forming (alpha) subunit of voltage-gated A-type potassium channels that mediates transmembrane potassium transport in excitable membranes, in brain and heart. In cardiomyocytes, may generate the transient outward potassium current I(To). In neurons, may conduct the transient subthreshold somatodendritic A-type potassium current (ISA). Kinetics properties are characterized by fast activation at subthreshold membrane potentials, rapid inactivation, and quick recovery from inactivation. Channel properties are modulated by interactions with regulatory subunits. Interaction with the regulatory subunits KCNIP1 or KCNIP2 modulates the channel gating kinetics namely channel activation and inactivation kinetics and rate of recovery from inactivation. Likewise, interaction with DPP6 modulates the channel gating kinetics namely channel activation and inactivation kinetics. This chain is A-type voltage-gated potassium channel KCND3 (KCND3), found in Homo sapiens (Human).